The sequence spans 717 residues: Pentatricopeptide repeat-containing protein At1g53600, mitochondrial (717 aa).

Residues Met1–Ser47 constitute a mitochondrion transit peptide. PPR repeat units lie at residues Ala49 to Arg79, Ser80 to Arg110, Val111 to Lys142, Asn143 to Lys173, Asp176 to Lys206, Glu207 to Thr241, Trp242 to Lys272, Asn274 to Phe308, Asp309 to Lys339, Asp340 to Ser374, Trp375 to Lys401, Asp402 to Pro436, Asn437 to Asn471, Asp472 to Pro502, Asn503 to Pro537, Asn538 to Ser568, and Gly574 to Lys604. The segment at Val609 to Lys684 is type E motif. The segment at Gly685–Glu715 is type E(+) motif.

This sequence belongs to the PPR family. PCMP-E subfamily.

The protein resides in the mitochondrion. The polypeptide is Pentatricopeptide repeat-containing protein At1g53600, mitochondrial (PCMP-E63) (Arabidopsis thaliana (Mouse-ear cress)).